A 441-amino-acid polypeptide reads, in one-letter code: Ribosomal protein uS12 methylthiotransferase RimO (441 aa).

An MTTase N-terminal domain is found at 7–117 (ASIAMISLGC…VVLEVHRAAP (111 aa)). [4Fe-4S] cluster-binding residues include cysteine 16, cysteine 52, cysteine 81, cysteine 150, cysteine 154, and cysteine 157. Residues 136–373 (LTPRHYAYLK…MAHQQAISAA (238 aa)) enclose the Radical SAM core domain. Positions 376 to 441 (QTRVGREIDV…DEYDLHGDAV (66 aa)) constitute a TRAM domain.

This sequence belongs to the methylthiotransferase family. RimO subfamily. [4Fe-4S] cluster is required as a cofactor.

It localises to the cytoplasm. It carries out the reaction L-aspartate(89)-[ribosomal protein uS12]-hydrogen + (sulfur carrier)-SH + AH2 + 2 S-adenosyl-L-methionine = 3-methylsulfanyl-L-aspartate(89)-[ribosomal protein uS12]-hydrogen + (sulfur carrier)-H + 5'-deoxyadenosine + L-methionine + A + S-adenosyl-L-homocysteine + 2 H(+). Functionally, catalyzes the methylthiolation of an aspartic acid residue of ribosomal protein uS12. This chain is Ribosomal protein uS12 methylthiotransferase RimO, found in Bordetella petrii (strain ATCC BAA-461 / DSM 12804 / CCUG 43448).